A 119-amino-acid polypeptide reads, in one-letter code: Protein TusC (119 aa).

This sequence belongs to the DsrF/TusC family. As to quaternary structure, heterohexamer, formed by a dimer of trimers. The hexameric TusBCD complex contains 2 copies each of TusB, TusC and TusD. The TusBCD complex interacts with TusE.

It localises to the cytoplasm. In terms of biological role, part of a sulfur-relay system required for 2-thiolation of 5-methylaminomethyl-2-thiouridine (mnm(5)s(2)U) at tRNA wobble positions. The chain is Protein TusC from Cronobacter sakazakii (strain ATCC BAA-894) (Enterobacter sakazakii).